We begin with the raw amino-acid sequence, 401 residues long: Mitochondrial distribution and morphology protein 12 (401 aa).

The SMP-LTD domain occupies 1 to 401 (MSIDINWDTL…VYPSFWTFLV (401 aa)). The segment covering 70 to 88 (YEEDEDYPDNEDDDDDEAG) has biased composition (acidic residues). 2 disordered regions span residues 70 to 95 (YEED…NPRN) and 190 to 247 (SLTL…EKSP). The span at 195–205 (PQSHPDPSSRP) shows a compositional bias: low complexity. Over residues 209–220 (HQHDDERRRSLA) the composition is skewed to basic and acidic residues.

The protein belongs to the MDM12 family. Component of the ER-mitochondria encounter structure (ERMES) or MDM complex, composed of MMM1, MDM10, MDM12 and MDM34. An MMM1 homodimer associates with one molecule of MDM12 on each side in a pairwise head-to-tail manner, and the SMP-LTD domains of MMM1 and MDM12 generate a continuous hydrophobic tunnel for phospholipid trafficking.

It is found in the mitochondrion outer membrane. It localises to the endoplasmic reticulum membrane. Functionally, component of the ERMES/MDM complex, which serves as a molecular tether to connect the endoplasmic reticulum (ER) and mitochondria. Components of this complex are involved in the control of mitochondrial shape and protein biogenesis, and function in nonvesicular lipid trafficking between the ER and mitochondria. MDM12 is required for the interaction of the ER-resident membrane protein MMM1 and the outer mitochondrial membrane-resident beta-barrel protein MDM10. The MDM12-MMM1 subcomplex functions in the major beta-barrel assembly pathway that is responsible for biogenesis of all mitochondrial outer membrane beta-barrel proteins, and acts in a late step after the SAM complex. The MDM10-MDM12-MMM1 subcomplex further acts in the TOM40-specific pathway after the action of the MDM12-MMM1 complex. Essential for establishing and maintaining the structure of mitochondria and maintenance of mtDNA nucleoids. The chain is Mitochondrial distribution and morphology protein 12 from Phaeosphaeria nodorum (strain SN15 / ATCC MYA-4574 / FGSC 10173) (Glume blotch fungus).